Reading from the N-terminus, the 181-residue chain is ATP-dependent protease subunit HslV (181 aa).

Threonine 11 is an active-site residue. Alanine 166, cysteine 169, and threonine 172 together coordinate Na(+).

The protein belongs to the peptidase T1B family. HslV subfamily. A double ring-shaped homohexamer of HslV is capped on each side by a ring-shaped HslU homohexamer. The assembly of the HslU/HslV complex is dependent on binding of ATP.

The protein localises to the cytoplasm. It catalyses the reaction ATP-dependent cleavage of peptide bonds with broad specificity.. Its activity is regulated as follows. Allosterically activated by HslU binding. Protease subunit of a proteasome-like degradation complex believed to be a general protein degrading machinery. In Chlorobaculum tepidum (strain ATCC 49652 / DSM 12025 / NBRC 103806 / TLS) (Chlorobium tepidum), this protein is ATP-dependent protease subunit HslV.